The chain runs to 70 residues: Translational regulator CsrA (70 aa).

Belongs to the CsrA/RsmA family. Homodimer; the beta-strands of each monomer intercalate to form a hydrophobic core, while the alpha-helices form wings that extend away from the core.

The protein localises to the cytoplasm. A key translational regulator that binds mRNA to regulate translation initiation and/or mRNA stability. Mediates global changes in gene expression, shifting from rapid growth to stress survival by linking envelope stress, the stringent response and the catabolite repression systems. Usually binds in the 5'-UTR; binding at or near the Shine-Dalgarno sequence prevents ribosome-binding, repressing translation, binding elsewhere in the 5'-UTR can activate translation and/or stabilize the mRNA. Its function is antagonized by small RNA(s). This is Translational regulator CsrA from Hydrogenovibrio crunogenus (strain DSM 25203 / XCL-2) (Thiomicrospira crunogena).